Consider the following 740-residue polypeptide: NAD(P)H-quinone oxidoreductase subunit 5, chloroplastic (740 aa).

Helical transmembrane passes span 9–29 (WIIP…LLVV), 40–60 (WAFI…NISI), 89–109 (IDSL…MVLI), 125–145 (FAYL…SNLI), 147–167 (IYIF…FWFT), 185–205 (GDFG…SFEF), 219–239 (NTIN…GAIA), 258–278 (TPIS…FLVA), 290–310 (IMYF…TLAL), 327–347 (LGYI…FHLI), 354–374 (ALLF…VGYS), 396–416 (TTFL…CFWS), 425–445 (WLYS…TAFY), 521–538 (MFSF…PYPH), 545–565 (LLSV…GIPL), 599–619 (FVIN…IASF), and 720–740 (YLFV…YFVL).

Belongs to the complex I subunit 5 family. As to quaternary structure, NDH is composed of at least 16 different subunits, 5 of which are encoded in the nucleus.

It is found in the plastid. The protein resides in the chloroplast thylakoid membrane. It carries out the reaction a plastoquinone + NADH + (n+1) H(+)(in) = a plastoquinol + NAD(+) + n H(+)(out). The catalysed reaction is a plastoquinone + NADPH + (n+1) H(+)(in) = a plastoquinol + NADP(+) + n H(+)(out). Its function is as follows. NDH shuttles electrons from NAD(P)H:plastoquinone, via FMN and iron-sulfur (Fe-S) centers, to quinones in the photosynthetic chain and possibly in a chloroplast respiratory chain. The immediate electron acceptor for the enzyme in this species is believed to be plastoquinone. Couples the redox reaction to proton translocation, and thus conserves the redox energy in a proton gradient. This Piper cenocladum (Ant piper) protein is NAD(P)H-quinone oxidoreductase subunit 5, chloroplastic (ndhF).